A 529-amino-acid polypeptide reads, in one-letter code: Arginine--tRNA ligase (529 aa).

Residues 113–123 (ANPTGPLHIGH) carry the 'HIGH' region motif.

Belongs to the class-I aminoacyl-tRNA synthetase family. As to quaternary structure, monomer.

The protein resides in the cytoplasm. The catalysed reaction is tRNA(Arg) + L-arginine + ATP = L-arginyl-tRNA(Arg) + AMP + diphosphate. The chain is Arginine--tRNA ligase from Campylobacter curvus (strain 525.92).